The primary structure comprises 313 residues: Adhesin MafA 2/3 (313 aa).

The signal sequence occupies residues 1 to 14 (MKTLLLLIPLVLTA). Cys15 is lipidated: N-palmitoyl cysteine. A lipid anchor (S-diacylglycerol cysteine) is attached at Cys15. Positions 282 to 298 (GDTTAQNRPDFKQNNGK) are enriched in polar residues. The segment at 282-313 (GDTTAQNRPDFKQNNGKNPDVGNEVIRRRKGG) is disordered.

It belongs to the MafA family.

The protein resides in the cell outer membrane. This chain is Adhesin MafA 2/3 (mafA2), found in Neisseria gonorrhoeae (strain ATCC 700825 / FA 1090).